The following is a 149-amino-acid chain: uncharacterized protein (149 aa).

Transmembrane regions (helical) follow at residues 91 to 111 (IFIL…LFHY) and 122 to 142 (ISIL…ICLL).

The protein resides in the membrane. This is an uncharacterized protein from Dictyostelium discoideum (Social amoeba).